The following is a 241-amino-acid chain: Demethylmenaquinone methyltransferase (241 aa).

Residues threonine 60, aspartate 81, and 106–107 (DA) contribute to the S-adenosyl-L-methionine site.

Belongs to the class I-like SAM-binding methyltransferase superfamily. MenG/UbiE family.

The catalysed reaction is a 2-demethylmenaquinol + S-adenosyl-L-methionine = a menaquinol + S-adenosyl-L-homocysteine + H(+). It participates in quinol/quinone metabolism; menaquinone biosynthesis; menaquinol from 1,4-dihydroxy-2-naphthoate: step 2/2. Functionally, methyltransferase required for the conversion of demethylmenaquinol (DMKH2) to menaquinol (MKH2). In Staphylococcus aureus (strain Mu3 / ATCC 700698), this protein is Demethylmenaquinone methyltransferase.